The primary structure comprises 251 residues: Flap endonuclease Xni (251 aa).

Residue Asp-104 coordinates Mg(2+). In terms of domain architecture, 5'-3' exonuclease spans 160-249 (VLPRQLPDYW…IDGNLQQLRL (90 aa)). Positions 171, 172, 180, 182, and 185 each coordinate K(+). Residues 184–189 (GIGPKS) form an interaction with DNA region.

It belongs to the Xni family. It depends on Mg(2+) as a cofactor. K(+) is required as a cofactor.

Functionally, has flap endonuclease activity. During DNA replication, flap endonucleases cleave the 5'-overhanging flap structure that is generated by displacement synthesis when DNA polymerase encounters the 5'-end of a downstream Okazaki fragment. The polypeptide is Flap endonuclease Xni (Salmonella dublin (strain CT_02021853)).